The sequence spans 691 residues: L-type lectin-domain containing receptor kinase S.6 (691 aa).

An N-terminal signal peptide occupies residues 1 to 25 (MNHHHYSLVIFHLILFLSLDFPTLS). Residues 26–311 (HRFSPPLQNL…VVGLKIPVWS (286 aa)) are Extracellular-facing. The legume-lectin like stretch occupies residues 27-257 (RFSPPLQNLT…LHIVERWKFR (231 aa)). N-linked (GlcNAc...) asparagine glycans are attached at residues Asn-34 and Asn-89. Residues 312-332 (LLPGLAAIVILVAFIVFSLIC) form a helical membrane-spanning segment. Residues 333–691 (GKKRISEEAD…PWMTPKSHFS (359 aa)) are Cytoplasmic-facing. Residues 366–653 (FNENAIVGQG…IRGEAPLPVL (288 aa)) form the Protein kinase domain. Residues 372–380 (VGQGASATV) and Lys-394 contribute to the ATP site. Catalysis depends on Asp-500, which acts as the Proton acceptor.

The protein in the C-terminal section; belongs to the protein kinase superfamily. Ser/Thr protein kinase family. This sequence in the N-terminal section; belongs to the leguminous lectin family.

It is found in the cell membrane. It catalyses the reaction L-seryl-[protein] + ATP = O-phospho-L-seryl-[protein] + ADP + H(+). The enzyme catalyses L-threonyl-[protein] + ATP = O-phospho-L-threonyl-[protein] + ADP + H(+). Functionally, involved in resistance response to the pathogenic oomycetes Phytophthora infestans and Phytophthora capsici and to the pathogenic bacteria Pseudomonas syringae. In Arabidopsis thaliana (Mouse-ear cress), this protein is L-type lectin-domain containing receptor kinase S.6.